A 218-amino-acid chain; its full sequence is Ras-related protein Rab-27B (218 aa).

An N-acetylthreonine modification is found at Thr2. 16–24 lines the GTP pocket; sequence GDSGVGKTT. An Effector region motif is present at residues 38-46; it reads FITTVGIDF. GTP is bound by residues 74–78, 133–136, and 163–165; these read DTAGQ, NKAD, and SAA. The cysteines at positions 123 and 188 are disulfide-linked. Residues Cys216 and Cys218 are each lipidated (S-geranylgeranyl cysteine). Position 218 is a cysteine methyl ester (Cys218).

Belongs to the small GTPase superfamily. Rab family. As to quaternary structure, interacts with SYTL2, SYTL4, MYRIP and MLPH. Interacts with RPH3A and RPH3A. Interacts (GDP-bound form preferentially) with DENND10.

The protein localises to the membrane. Its subcellular location is the late endosome. It catalyses the reaction GTP + H2O = GDP + phosphate + H(+). Its activity is regulated as follows. Regulated by guanine nucleotide exchange factors (GEFs) which promote the exchange of bound GDP for free GTP, GTPase activating proteins (GAPs) which increase the GTP hydrolysis activity, and GDP dissociation inhibitors which inhibit the dissociation of the nucleotide from the GTPase. Activated by GEFs such as DENND10. Small GTPase which cycles between active GTP-bound and inactive GDP-bound states. In its active state, binds to a variety of effector proteins to regulate homeostasis of late endocytic pathway, including endosomal positioning, maturation and secretion. Plays a role in NTRK2/TRKB axonal anterograde transport by facilitating the association of NTRK2/TRKB with KLC1. May be involved in targeting uroplakins to urothelial apical membranes. This chain is Ras-related protein Rab-27B (Rab27b), found in Rattus norvegicus (Rat).